Here is a 310-residue protein sequence, read N- to C-terminus: Probable manganese-dependent inorganic pyrophosphatase (310 aa).

6 residues coordinate Mn(2+): histidine 9, aspartate 13, aspartate 15, aspartate 75, histidine 97, and aspartate 149.

The protein belongs to the PPase class C family. It depends on Mn(2+) as a cofactor.

It localises to the cytoplasm. It catalyses the reaction diphosphate + H2O = 2 phosphate + H(+). The chain is Probable manganese-dependent inorganic pyrophosphatase from Brevibacillus brevis (strain 47 / JCM 6285 / NBRC 100599).